Reading from the N-terminus, the 763-residue chain is uncharacterized protein (763 aa).

A TR mART core domain is found at 380–607; sequence DSVLNPFNTN…YNIKVITMRL (228 aa). The chain crosses the membrane as a helical span at residues 684–700; it reads SYVSIYALLCPLLTNIY.

It is found in the membrane. This is an uncharacterized protein from Acanthamoeba polyphaga mimivirus (APMV).